Here is a 551-residue protein sequence, read N- to C-terminus: ATP synthase subunit alpha, mitochondrial (551 aa).

210–217 (GDRQTGKT) is a binding site for ATP.

It belongs to the ATPase alpha/beta chains family. As to quaternary structure, F-type ATPases have 2 components, CF(1) - the catalytic core - and CF(0) - the membrane proton channel. CF(1) has five subunits: alpha(3), beta(3), gamma(1), delta(1), epsilon(1). CF(0) has three main subunits: a, b and c.

The protein resides in the mitochondrion. The protein localises to the mitochondrion inner membrane. Its function is as follows. Mitochondrial membrane ATP synthase (F(1)F(0) ATP synthase or Complex V) produces ATP from ADP in the presence of a proton gradient across the membrane which is generated by electron transport complexes of the respiratory chain. F-type ATPases consist of two structural domains, F(1) - containing the extramembraneous catalytic core, and F(0) - containing the membrane proton channel, linked together by a central stalk and a peripheral stalk. During catalysis, ATP synthesis in the catalytic domain of F(1) is coupled via a rotary mechanism of the central stalk subunits to proton translocation. Subunits alpha and beta form the catalytic core in F(1). Rotation of the central stalk against the surrounding alpha(3)beta(3) subunits leads to hydrolysis of ATP in three separate catalytic sites on the beta subunits. Subunit alpha does not bear the catalytic high-affinity ATP-binding sites. The polypeptide is ATP synthase subunit alpha, mitochondrial (atp-1) (Neurospora crassa (strain ATCC 24698 / 74-OR23-1A / CBS 708.71 / DSM 1257 / FGSC 987)).